A 107-amino-acid polypeptide reads, in one-letter code: DNA-directed RNA polymerase subunit omega (107 aa).

The protein belongs to the RNA polymerase subunit omega family. The RNAP catalytic core consists of 2 alpha, 1 beta, 1 beta' and 1 omega subunit. When a sigma factor is associated with the core the holoenzyme is formed, which can initiate transcription.

It catalyses the reaction RNA(n) + a ribonucleoside 5'-triphosphate = RNA(n+1) + diphosphate. Its function is as follows. Promotes RNA polymerase assembly. Latches the N- and C-terminal regions of the beta' subunit thereby facilitating its interaction with the beta and alpha subunits. The chain is DNA-directed RNA polymerase subunit omega from Mycolicibacterium smegmatis (strain ATCC 700084 / mc(2)155) (Mycobacterium smegmatis).